A 259-amino-acid chain; its full sequence is Aspartate/glutamate leucyltransferase (259 aa).

It belongs to the R-transferase family. Bpt subfamily.

It is found in the cytoplasm. It catalyses the reaction N-terminal L-glutamyl-[protein] + L-leucyl-tRNA(Leu) = N-terminal L-leucyl-L-glutamyl-[protein] + tRNA(Leu) + H(+). It carries out the reaction N-terminal L-aspartyl-[protein] + L-leucyl-tRNA(Leu) = N-terminal L-leucyl-L-aspartyl-[protein] + tRNA(Leu) + H(+). Functionally, functions in the N-end rule pathway of protein degradation where it conjugates Leu from its aminoacyl-tRNA to the N-termini of proteins containing an N-terminal aspartate or glutamate. The chain is Aspartate/glutamate leucyltransferase from Rhizobium meliloti (strain 1021) (Ensifer meliloti).